Reading from the N-terminus, the 157-residue chain is Electron transfer flavoprotein regulatory factor 1 homolog (157 aa).

The protein belongs to the complex I LYR family.

The protein localises to the mitochondrion. The sequence is that of Electron transfer flavoprotein regulatory factor 1 homolog from Dictyostelium discoideum (Social amoeba).